A 123-amino-acid polypeptide reads, in one-letter code: WAP four-disulfide core domain protein 5 (123 aa).

The first 24 residues, 1–24 (MRIQSLLLLGALLAVGSQPPAAFG), serve as a signal peptide directing secretion. WAP domains are found at residues 27–73 (KGEK…CVPR) and 74–121 (VSVK…RDPA). 8 cysteine pairs are disulfide-bonded: Cys-34–Cys-62, Cys-41–Cys-66, Cys-49–Cys-61, Cys-55–Cys-70, Cys-81–Cys-109, Cys-88–Cys-113, Cys-96–Cys-108, and Cys-102–Cys-117.

It is found in the secreted. Putative acid-stable proteinase inhibitor. This Saimiri boliviensis boliviensis (Bolivian squirrel monkey) protein is WAP four-disulfide core domain protein 5 (WFDC5).